The chain runs to 482 residues: Ubiquitin carboxyl-terminal hydrolase 6 (482 aa).

The Ubiquitin-like domain occupies 2 to 77; sequence PTVSVKWQKK…LMMMGTADEI (76 aa). One can recognise a USP domain in the interval 104–478; the sequence is AGLVNLGNTC…MAYITMYKAR (375 aa). C113 functions as the Nucleophile in the catalytic mechanism. Positions 172–191 are calmodulin-binding; that stretch reads SQFWMVLRKKYPQFSQLQNG. 2 stretches are compositionally biased toward basic and acidic residues: residues 350 to 361 and 371 to 381; these read PRQKLREEEGKK and GSKDSDVKMTD. Residues 350–407 form a disordered region; the sequence is PRQKLREEEGKKLGLQTSAKSGSKDSDVKMTDAEASANGSGESSTVNPQEGTSSEKET. The segment covering 382–393 has biased composition (low complexity); that stretch reads AEASANGSGESS. H430 serves as the catalytic Proton acceptor.

The protein belongs to the peptidase C19 family. Interacts with calmodulin (CaM).

It catalyses the reaction Thiol-dependent hydrolysis of ester, thioester, amide, peptide and isopeptide bonds formed by the C-terminal Gly of ubiquitin (a 76-residue protein attached to proteins as an intracellular targeting signal).. Its function is as follows. Recognizes and hydrolyzes the peptide bond at the C-terminal Gly of ubiquitin. Involved in the processing of poly-ubiquitin precursors as well as that of ubiquitinated proteins. The protein is Ubiquitin carboxyl-terminal hydrolase 6 (UBP6) of Arabidopsis thaliana (Mouse-ear cress).